The sequence spans 275 residues: Release factor glutamine methyltransferase (275 aa).

Residues 114–118, Asp-137, Trp-165, and Asn-180 each bind S-adenosyl-L-methionine; that span reads GTGSG. 180 to 183 provides a ligand contact to substrate; that stretch reads NPPY.

Belongs to the protein N5-glutamine methyltransferase family. PrmC subfamily.

The catalysed reaction is L-glutaminyl-[peptide chain release factor] + S-adenosyl-L-methionine = N(5)-methyl-L-glutaminyl-[peptide chain release factor] + S-adenosyl-L-homocysteine + H(+). In terms of biological role, methylates the class 1 translation termination release factors RF1/PrfA and RF2/PrfB on the glutamine residue of the universally conserved GGQ motif. In Xylella fastidiosa (strain 9a5c), this protein is Release factor glutamine methyltransferase.